The primary structure comprises 467 residues: Asparagine--tRNA ligase (467 aa).

This sequence belongs to the class-II aminoacyl-tRNA synthetase family. As to quaternary structure, homodimer.

The protein localises to the cytoplasm. It catalyses the reaction tRNA(Asn) + L-asparagine + ATP = L-asparaginyl-tRNA(Asn) + AMP + diphosphate + H(+). The chain is Asparagine--tRNA ligase from Legionella pneumophila (strain Paris).